The following is a 68-amino-acid chain: MARVTVDDCLKRIPNRFQMTLAAAHRARQLANGATPLVDPEKHKPTVVALKEMGAGKVGLEVLNRGQA.

It belongs to the RNA polymerase subunit omega family. The RNAP catalytic core consists of 2 alpha, 1 beta, 1 beta' and 1 omega subunit. When a sigma factor is associated with the core the holoenzyme is formed, which can initiate transcription.

The catalysed reaction is RNA(n) + a ribonucleoside 5'-triphosphate = RNA(n+1) + diphosphate. Promotes RNA polymerase assembly. Latches the N- and C-terminal regions of the beta' subunit thereby facilitating its interaction with the beta and alpha subunits. This Dechloromonas aromatica (strain RCB) protein is DNA-directed RNA polymerase subunit omega.